Reading from the N-terminus, the 765-residue chain is Glycine--tRNA ligase (765 aa).

The transit peptide at 1 to 87 directs the protein to the mitochondrion; that stretch reads MSLQLLKALP…LRSAAAEFIM (87 aa). The interval 41–73 is disordered; the sequence is TTTKPTPSAPPPPPPTQPQQPAATTSWGTKKQN. Residues 47–58 show a composition bias toward pro residues; it reads PSAPPPPPPTQP. The WHEP-TRS domain maps to 95–151; sequence QLAPLRERVQEQGNLVRDLKAKGAPEIDVKKAVAELKARKKLLEDKELALTPSVVSF. Glu331 is a binding site for glycine. ATP-binding positions include 363 to 365 and 374 to 375; these read RNE and RV. Glu382 contacts glycine. Position 489 to 490 (489 to 490) interacts with ATP; the sequence is EC. 609 to 611 contributes to the glycine binding site; sequence EPS. Arg616 lines the ATP pocket.

The protein belongs to the class-II aminoacyl-tRNA synthetase family. Homodimer.

The protein localises to the mitochondrion. It localises to the cytoplasm. Its subcellular location is the cell projection. The protein resides in the axon. The catalysed reaction is 2 ATP + H(+) = P(1),P(4)-bis(5'-adenosyl) tetraphosphate + diphosphate. It carries out the reaction tRNA(Gly) + glycine + ATP = glycyl-tRNA(Gly) + AMP + diphosphate. Its function is as follows. Catalyzes the ATP-dependent ligation of glycine to the 3'-end of its cognate tRNA, via the formation of an aminoacyl-adenylate intermediate (Gly-AMP). Also produces diadenosine tetraphosphate (Ap4A), a universal pleiotropic signaling molecule needed for cell regulation pathways, by direct condensation of 2 ATPs. Thereby, may play a special role in Ap4A homeostasis. Required for terminal arborization of both dendrites and axons during development. The polypeptide is Glycine--tRNA ligase (Drosophila melanogaster (Fruit fly)).